Consider the following 271-residue polypeptide: uncharacterized protein (271 aa).

Solcar repeat units lie at residues 3–74 (VQTL…AKRR), 81–163 (EGAI…SKKY), and 171–268 (DISV…FKSK). Transmembrane regions (helical) follow at residues 5–26 (TLMA…IDTI), 49–69 (GLPI…STYV), 84–104 (ILYS…WTPL), 138–158 (GYWM…VCYE), 170–190 (WDIS…ATTI), and 240–261 (FTRG…SMSV).

The protein belongs to the mitochondrial carrier (TC 2.A.29) family.

The protein localises to the mitochondrion inner membrane. This is an uncharacterized protein from Schizosaccharomyces pombe (strain 972 / ATCC 24843) (Fission yeast).